A 203-amino-acid polypeptide reads, in one-letter code: TATA-binding protein 2 (203 aa).

A run of 2 repeats spans residues 28-104 (LQNI…ARII) and 118-195 (IQNI…YPVL).

The protein belongs to the TBP family. In terms of assembly, belongs to the TFIID complex together with the TBP-associated factors (TAFs). Binds DNA as monomer. Interacts with RF2A and TFIIB. Interacts with CWZF7.

It is found in the nucleus. General transcription factor that functions at the core of the DNA-binding multiprotein factor TFIID. Binding of TFIID to the TATA box is the initial transcriptional step of the pre-initiation complex (PIC), playing a role in the activation of eukaryotic genes transcribed by RNA polymerase II. This Oryza sativa subsp. japonica (Rice) protein is TATA-binding protein 2 (TBP2).